The sequence spans 238 residues: Orotidine 5'-phosphate decarboxylase (238 aa).

Residues D13, K35, 62-71 (DLKFHDIPNT), T121, R182, Q191, G211, and R212 each bind substrate. K64 (proton donor) is an active-site residue.

The protein belongs to the OMP decarboxylase family. Type 1 subfamily. Homodimer.

It catalyses the reaction orotidine 5'-phosphate + H(+) = UMP + CO2. Its pathway is pyrimidine metabolism; UMP biosynthesis via de novo pathway; UMP from orotate: step 2/2. Catalyzes the decarboxylation of orotidine 5'-monophosphate (OMP) to uridine 5'-monophosphate (UMP). The sequence is that of Orotidine 5'-phosphate decarboxylase from Saccharophagus degradans (strain 2-40 / ATCC 43961 / DSM 17024).